Reading from the N-terminus, the 242-residue chain is Venom nerve growth factor 2 (242 aa).

Residues 1–18 (MSMLCYTLIIAFLIGIWA) form the signal peptide. Positions 19-125 (APQSEDNVPL…ALNRNIQAKR (107 aa)) are excised as a propeptide. A compositionally biased stretch (basic and acidic residues) spans 47–66 (DLKTSRNTDQRHPAPKKADD). Residues 47 to 70 (DLKTSRNTDQRHPAPKKADDQELG) form a disordered region. 3 disulfides stabilise this stretch: Cys139–Cys203, Cys181–Cys231, and Cys191–Cys233.

Belongs to the NGF-beta family. As to quaternary structure, homodimer; non-covalently linked. As to expression, expressed by the venom gland.

The protein localises to the secreted. Functionally, nerve growth factor is important for the development and maintenance of the sympathetic and sensory nervous systems. It stimulates division and differentiation of sympathetic and embryonic sensory neurons as well as basal forebrain cholinergic neurons in the brain. Its relevance in the snake venom is not clear. However, it has been shown to inhibit metalloproteinase-dependent proteolysis of platelet glycoprotein Ib alpha, suggesting a metalloproteinase inhibition to prevent metalloprotease autodigestion and/or protection against prey proteases. Binds a lipid between the two protein chains in the homodimer. The lipid-bound form promotes histamine relase from mouse mast cells, contrary to the lipid-free form. In Pseudechis australis (Mulga snake), this protein is Venom nerve growth factor 2.